The sequence spans 131 residues: MIVGLGTDIVEIARIESRIPAAGDEALLTCRLAKRVLTETEFALFVGSTQPARYLAKRFAAKEAAAKALGTGIGRGVSFQHIEISNNDNGAPQVVFTDGASERLSQLGGVKAHLSIADEQHYATATVILES.

Mg(2+) contacts are provided by Asp8 and Glu63.

The protein belongs to the P-Pant transferase superfamily. AcpS family. Mg(2+) serves as cofactor.

The protein resides in the cytoplasm. The catalysed reaction is apo-[ACP] + CoA = holo-[ACP] + adenosine 3',5'-bisphosphate + H(+). Transfers the 4'-phosphopantetheine moiety from coenzyme A to a Ser of acyl-carrier-protein. The sequence is that of Holo-[acyl-carrier-protein] synthase from Shewanella pealeana (strain ATCC 700345 / ANG-SQ1).